The primary structure comprises 250 residues: 4-hydroxy-tetrahydrodipicolinate reductase (250 aa).

Residues 10-15, 78-80, and 105-108 contribute to the NAD(+) site; these read GARGRI, GTT, and APNF. The active-site Proton donor/acceptor is histidine 135. Residue histidine 136 coordinates (S)-2,3,4,5-tetrahydrodipicolinate. The Proton donor role is filled by lysine 139. Position 145 to 146 (145 to 146) interacts with (S)-2,3,4,5-tetrahydrodipicolinate; the sequence is GT. The disordered stretch occupies residues 158–177; it reads RAEAGSAPQPDATTTALDGA.

The protein belongs to the DapB family.

Its subcellular location is the cytoplasm. The enzyme catalyses (S)-2,3,4,5-tetrahydrodipicolinate + NAD(+) + H2O = (2S,4S)-4-hydroxy-2,3,4,5-tetrahydrodipicolinate + NADH + H(+). It catalyses the reaction (S)-2,3,4,5-tetrahydrodipicolinate + NADP(+) + H2O = (2S,4S)-4-hydroxy-2,3,4,5-tetrahydrodipicolinate + NADPH + H(+). It participates in amino-acid biosynthesis; L-lysine biosynthesis via DAP pathway; (S)-tetrahydrodipicolinate from L-aspartate: step 4/4. Catalyzes the conversion of 4-hydroxy-tetrahydrodipicolinate (HTPA) to tetrahydrodipicolinate. This Streptomyces griseus subsp. griseus (strain JCM 4626 / CBS 651.72 / NBRC 13350 / KCC S-0626 / ISP 5235) protein is 4-hydroxy-tetrahydrodipicolinate reductase.